Here is a 449-residue protein sequence, read N- to C-terminus: Hyaluronidase (449 aa).

A signal peptide spans 1-23; sequence MYHLWIKCLAAWIFLKRFNGVHV. Intrachain disulfides connect C47/C340 and C211/C227. 3 N-linked (GlcNAc...) asparagine glycosylation sites follow: N67, N103, and N111. The active-site Proton donor is the E135. A glycan (N-linked (GlcNAc...) asparagine) is linked at N153. N357 carries an N-linked (GlcNAc...) asparagine glycan. 3 cysteine pairs are disulfide-bonded: C365-C376, C370-C427, and C429-C438. N401 carries an N-linked (GlcNAc...) asparagine glycan. The EGF-like domain occupies 427–438; it reads CQCYQGWKGLYC.

This sequence belongs to the glycosyl hydrolase 56 family. Monomer. Expressed by the venom gland.

The protein localises to the secreted. It catalyses the reaction Random hydrolysis of (1-&gt;4)-linkages between N-acetyl-beta-D-glucosamine and D-glucuronate residues in hyaluronate.. Functionally, snake venom endo-hyaluronidase that degrades hyaluronan to smaller oligosaccharide fragments. In venom, it is not toxic by itself, but increases the diffusion of other venom proteins by degrading the extracellular matrix. In addition, it displays antiedematogenic activity. The protein is Hyaluronidase of Crotalus adamanteus (Eastern diamondback rattlesnake).